Here is a 673-residue protein sequence, read N- to C-terminus: DNA ligase (673 aa).

Residues Asp-38–Asp-42, Ser-87–Leu-88, and Glu-119 each bind NAD(+). Lys-121 (N6-AMP-lysine intermediate) is an active-site residue. Positions 142, 179, 296, and 320 each coordinate NAD(+). 4 residues coordinate Zn(2+): Cys-414, Cys-417, Cys-432, and Cys-438. Positions Val-595–Ser-673 constitute a BRCT domain.

The protein belongs to the NAD-dependent DNA ligase family. LigA subfamily. The cofactor is Mg(2+). Mn(2+) serves as cofactor.

It catalyses the reaction NAD(+) + (deoxyribonucleotide)n-3'-hydroxyl + 5'-phospho-(deoxyribonucleotide)m = (deoxyribonucleotide)n+m + AMP + beta-nicotinamide D-nucleotide.. In terms of biological role, DNA ligase that catalyzes the formation of phosphodiester linkages between 5'-phosphoryl and 3'-hydroxyl groups in double-stranded DNA using NAD as a coenzyme and as the energy source for the reaction. It is essential for DNA replication and repair of damaged DNA. This chain is DNA ligase, found in Coxiella burnetii (strain RSA 493 / Nine Mile phase I).